Consider the following 177-residue polypeptide: Large ribosomal subunit protein uL6 (177 aa).

The protein belongs to the universal ribosomal protein uL6 family. Part of the 50S ribosomal subunit.

This protein binds to the 23S rRNA, and is important in its secondary structure. It is located near the subunit interface in the base of the L7/L12 stalk, and near the tRNA binding site of the peptidyltransferase center. In Latilactobacillus sakei subsp. sakei (strain 23K) (Lactobacillus sakei subsp. sakei), this protein is Large ribosomal subunit protein uL6.